A 43-amino-acid chain; its full sequence is Defensin (43 aa).

3 cysteine pairs are disulfide-bonded: Cys-3–Cys-34, Cys-20–Cys-39, and Cys-24–Cys-41.

It localises to the secreted. Its function is as follows. Antibacterial peptide. Affects Gram-negative bacteria including methicillin-resistant Staphylococcus aureus. The polypeptide is Defensin (Trypoxylus dichotomus (Japanese rhinoceros beetle)).